A 489-amino-acid chain; its full sequence is Cytochrome P450 monooxygenase AMT3 (489 aa).

The chain crosses the membrane as a helical span at residues 292 to 312 (LFMVAGTETTITALSGLVFLL). Residue Cys436 participates in heme binding.

Belongs to the cytochrome P450 family. It depends on heme as a cofactor.

It is found in the membrane. It functions in the pathway mycotoxin biosynthesis. In terms of biological role, cytochrome P450 monooxygenase; part of the gene clusters that mediate the biosynthesis of AM-toxins, host-selective toxins (HSTs) causing Alternaria blotch on apple, a worldwide distributed disease. AM-toxins are cyclic depsipeptides containing the 3 residues 2-hydroxy-isovaleric acid (2-HIV), dehydroalanine, L-alanine which are common for all 3 AM-toxins I to III. The fourth precursor is L-alpha-amino-methoxyphenyl-valeric acid (L-Amv) for AM-toxin I, L-alpha-amino-phenyl-valeric acid (L-Apv) for AM-toxin II, and L-alpha-amino-hydroxyphenyl-valeric acid (L-Ahv) for AM-toxin III. AM-toxins have two target sites for affecting susceptible apple cells; they cause invagination of the plasma membrane and electrolyte loss and chloroplast disorganization. The non-ribosomal peptide synthetase AMT1 contains 4 catalytic modules and is responsible for activation of each residue in AM-toxin. The aldo-keto reductase AMT2 catalyzes the conversion of 2-keto-isovaleric acid (2-KIV) to 2-hydroxy-isovaleric acid (2-HIV), one of the precursor residues incorporated by AMT1 during AM-toxin biosynthesis, by reduction of its ketone to an alcohol. The cytochrome P450 monooxygenase AMT3 and the thioesterase AMT4 are also important for AM-toxin production, but their exact function within the AM-toxin biosynthesis are not known yet. Up to 21 proteins (including AMT1 to AMT4) are predicted to be involved in AM-toxin biosynthesis since their expression ishighly up-regulated in AM-toxin-producing cultures. The sequence is that of Cytochrome P450 monooxygenase AMT3 from Alternaria alternata (Alternaria rot fungus).